Here is a 235-residue protein sequence, read N- to C-terminus: Phosphoribosylaminoimidazole-succinocarboxamide synthase (235 aa).

It belongs to the SAICAR synthetase family.

The enzyme catalyses 5-amino-1-(5-phospho-D-ribosyl)imidazole-4-carboxylate + L-aspartate + ATP = (2S)-2-[5-amino-1-(5-phospho-beta-D-ribosyl)imidazole-4-carboxamido]succinate + ADP + phosphate + 2 H(+). Its pathway is purine metabolism; IMP biosynthesis via de novo pathway; 5-amino-1-(5-phospho-D-ribosyl)imidazole-4-carboxamide from 5-amino-1-(5-phospho-D-ribosyl)imidazole-4-carboxylate: step 1/2. The protein is Phosphoribosylaminoimidazole-succinocarboxamide synthase of Prosthecochloris aestuarii (strain DSM 271 / SK 413).